We begin with the raw amino-acid sequence, 238 residues long: MKLTPKELDKLMLHYAGELAKKRKERGIKLNYVEAVALISAHVMEEARAGKKSAAELMQEGRTLLKPDDVMDGVASMIHEVGIEAMFPDGTKLVTVHTPIESKGKLVPGELFLKNEDITINEGKQAISVKVKNVGDRPVQIGSHFHFFEVNRCLDFDREKAFGKRLDIASGTAVRFEPGEEKSVELIDIGGNRRIFGFNALVDRQADNESKKIALHRAKERGFHGAKSDDNYVKTIKE.

The urease gamma stretch occupies residues 1-102 (MKLTPKELDK…LVTVHTPIES (102 aa)). The interval 103-238 (KGKLVPGELF…DDNYVKTIKE (136 aa)) is urease beta.

The protein in the N-terminal section; belongs to the urease gamma subunit family. This sequence in the C-terminal section; belongs to the urease beta subunit family. As to quaternary structure, heterohexamer of 3 UreA (alpha) and 3 UreB (beta) subunits.

It is found in the cytoplasm. The enzyme catalyses urea + 2 H2O + H(+) = hydrogencarbonate + 2 NH4(+). It functions in the pathway nitrogen metabolism; urea degradation; CO(2) and NH(3) from urea (urease route): step 1/1. This is Urease subunit alpha from Helicobacter acinonychis (strain Sheeba).